The primary structure comprises 346 residues: 4-hydroxy-2-oxovalerate aldolase 2 (346 aa).

The Pyruvate carboxyltransferase domain maps to 8–260 (VTVHDMTLRD…ETGVDVFKIQ (253 aa)). 16–17 (RD) is a substrate binding site. Asp17 contributes to the Mn(2+) binding site. Catalysis depends on His20, which acts as the Proton acceptor. 2 residues coordinate substrate: Ser170 and His199. Mn(2+) contacts are provided by His199 and His201. Position 290 (Tyr290) interacts with substrate.

This sequence belongs to the 4-hydroxy-2-oxovalerate aldolase family.

It catalyses the reaction (S)-4-hydroxy-2-oxopentanoate = acetaldehyde + pyruvate. This Metapseudomonas furukawaii (Pseudomonas furukawaii) protein is 4-hydroxy-2-oxovalerate aldolase 2 (bphX3).